A 378-amino-acid polypeptide reads, in one-letter code: Carbamoyl phosphate synthase small chain (378 aa).

Residues 1-189 form a CPSase region; it reads MTKPAILALA…DSHPEIPAGE (189 aa). L-glutamine-binding residues include S47, G241, and G243. In terms of domain architecture, Glutamine amidotransferase type-1 spans 193 to 378; that stretch reads HVVAYDYGVK…RFISAMAERR (186 aa). Residue C269 is the Nucleophile of the active site. The L-glutamine site is built by L270, Q273, N311, G313, and F314. Catalysis depends on residues H353 and E355.

The protein belongs to the CarA family. Composed of two chains; the small (or glutamine) chain promotes the hydrolysis of glutamine to ammonia, which is used by the large (or ammonia) chain to synthesize carbamoyl phosphate. Tetramer of heterodimers (alpha,beta)4.

The enzyme catalyses hydrogencarbonate + L-glutamine + 2 ATP + H2O = carbamoyl phosphate + L-glutamate + 2 ADP + phosphate + 2 H(+). It catalyses the reaction L-glutamine + H2O = L-glutamate + NH4(+). The protein operates within amino-acid biosynthesis; L-arginine biosynthesis; carbamoyl phosphate from bicarbonate: step 1/1. Its pathway is pyrimidine metabolism; UMP biosynthesis via de novo pathway; (S)-dihydroorotate from bicarbonate: step 1/3. Functionally, small subunit of the glutamine-dependent carbamoyl phosphate synthetase (CPSase). CPSase catalyzes the formation of carbamoyl phosphate from the ammonia moiety of glutamine, carbonate, and phosphate donated by ATP, constituting the first step of 2 biosynthetic pathways, one leading to arginine and/or urea and the other to pyrimidine nucleotides. The small subunit (glutamine amidotransferase) binds and cleaves glutamine to supply the large subunit with the substrate ammonia. The protein is Carbamoyl phosphate synthase small chain of Pseudomonas aeruginosa (strain ATCC 15692 / DSM 22644 / CIP 104116 / JCM 14847 / LMG 12228 / 1C / PRS 101 / PAO1).